The sequence spans 105 residues: Vacuolar ATPase assembly integral membrane protein VMA21 homolog (105 aa).

The disordered stretch occupies residues 1–26 (MSTKNKKAAGGNGVAPKQTRQQSHDS). Residues 1-36 (MSTKNKKAAGGNGVAPKQTRQQSHDSQDYSSFKTVL) lie on the Cytoplasmic side of the membrane. A helical membrane pass occupies residues 37–57 (FYCMLIVFLPVLTFFVLKGFV). Topologically, residues 58–68 (LDQFLDISEVK) are lumenal. Residues 69–89 (VNIASAVGAVVALHIALGLYI) traverse the membrane as a helical segment. Over 90 to 105 (YRAYFGAPGSKGSKTD) the chain is Cytoplasmic.

This sequence belongs to the VMA21 family.

The protein resides in the endoplasmic reticulum membrane. Its subcellular location is the endoplasmic reticulum-Golgi intermediate compartment membrane. It localises to the cytoplasmic vesicle. It is found in the COPII-coated vesicle membrane. Required for the assembly of the V0 complex of the vacuolar ATPase (V-ATPase) in the endoplasmic reticulum. The polypeptide is Vacuolar ATPase assembly integral membrane protein VMA21 homolog (Drosophila melanogaster (Fruit fly)).